Here is a 371-residue protein sequence, read N- to C-terminus: Aromatic peroxygenase (371 aa).

The first 18 residues, 1–18, serve as a signal peptide directing secretion; sequence MKYFPLFPTLVFAARVVA. The propeptide occupies 19–43; that stretch reads FPAYASLAGLSQQELDAIIPTLEAR. N54 is a glycosylation site (N-linked (GlcNAc...) asparagine). C79 provides a ligand contact to heme. N-linked (GlcNAc...) asparagine glycosylation is found at N184, N204, N225, and N329. C321 and C362 are oxidised to a cystine.

Belongs to the chloroperoxidase family. Requires heme b as cofactor. In terms of processing, N-glycosylated.

The catalysed reaction is RH + H2O2 = ROH + H2O.. Its function is as follows. Aromatic peroxidase that oxidizes aryl alcohols into the corresponding aldehydes and then into the corresponding benzoic acids. Oxidizes toluene and naphthalene. Catalyzes the regioselective peroxide-dependent hydroxylation of propranolol and diclofenac to 5-hydroxypropranolol and 4'-hydroxydiclofenac. Catalyzes the regioselective peroxide-dependent hydroxylation of naphthalene to 1-naphthol or 2-naphthol via a naphthalene 1,2-oxide intermediate. Catalyzes the regioselective peroxide-dependent oxidation of pyridine to pyridine N-oxide. Halogenates monochlorodimedone and phenol. Oxidizes the sulfur-containing heterocycle dibenzothiophene to yield ring-hydroxylation products and to a lesser extent sulfoxidation products. This is Aromatic peroxygenase from Cyclocybe aegerita (Black poplar mushroom).